A 300-amino-acid chain; its full sequence is Urease accessory protein UreD (300 aa).

It belongs to the UreD family. In terms of assembly, ureD, UreF and UreG form a complex that acts as a GTP-hydrolysis-dependent molecular chaperone, activating the urease apoprotein by helping to assemble the nickel containing metallocenter of UreC. The UreE protein probably delivers the nickel.

Its subcellular location is the cytoplasm. Required for maturation of urease via the functional incorporation of the urease nickel metallocenter. The protein is Urease accessory protein UreD of Prochlorococcus marinus (strain AS9601).